Consider the following 374-residue polypeptide: GTPase Obg (374 aa).

In terms of domain architecture, Obg spans M1 to L159. Residues A160–P333 form the OBG-type G domain. GTP is bound by residues G166–S173, F191–Y195, D213–G216, N283–D286, and S314–A316. Residues S173 and T193 each contribute to the Mg(2+) site. Residues P337–V374 form a disordered region. Residues W360 to V374 show a composition bias toward acidic residues.

This sequence belongs to the TRAFAC class OBG-HflX-like GTPase superfamily. OBG GTPase family. In terms of assembly, monomer. Mg(2+) serves as cofactor.

It localises to the cytoplasm. In terms of biological role, an essential GTPase which binds GTP, GDP and possibly (p)ppGpp with moderate affinity, with high nucleotide exchange rates and a fairly low GTP hydrolysis rate. Plays a role in control of the cell cycle, stress response, ribosome biogenesis and in those bacteria that undergo differentiation, in morphogenesis control. In Acidithiobacillus ferrooxidans (strain ATCC 23270 / DSM 14882 / CIP 104768 / NCIMB 8455) (Ferrobacillus ferrooxidans (strain ATCC 23270)), this protein is GTPase Obg.